The sequence spans 354 residues: Histidinol-phosphate aminotransferase (354 aa).

Residue Lys-210 is modified to N6-(pyridoxal phosphate)lysine.

It belongs to the class-II pyridoxal-phosphate-dependent aminotransferase family. Histidinol-phosphate aminotransferase subfamily. As to quaternary structure, homodimer. It depends on pyridoxal 5'-phosphate as a cofactor.

It catalyses the reaction L-histidinol phosphate + 2-oxoglutarate = 3-(imidazol-4-yl)-2-oxopropyl phosphate + L-glutamate. Its pathway is amino-acid biosynthesis; L-histidine biosynthesis; L-histidine from 5-phospho-alpha-D-ribose 1-diphosphate: step 7/9. The polypeptide is Histidinol-phosphate aminotransferase (Clostridium botulinum (strain 657 / Type Ba4)).